The sequence spans 466 residues: Secreted RxLR effector protein 101 (466 aa).

An N-terminal signal peptide occupies residues 1–21 (MRGAYSVITALLVVASSQIAA). The short motif at 48–63 (RYLRGSQHVHDSNEER) is the RxLR-dEER element. Disordered stretches follow at residues 99 to 127 (KMPH…GANA) and 384 to 405 (RTFN…VRSS). A compositionally biased stretch (basic residues) spans 109–121 (KVSRVTRTGKKMT). Positions 385–395 (TFNGNTDTASL) are enriched in polar residues.

This sequence belongs to the RxLR effector family.

The protein resides in the secreted. Its subcellular location is the host nucleus. In terms of biological role, secreted effector that partially suppresses the host cell death induced by cell death-inducing proteins. This Plasmopara viticola (Downy mildew of grapevine) protein is Secreted RxLR effector protein 101.